We begin with the raw amino-acid sequence, 611 residues long: Fatty acid photodecarboxylase, chloroplastic (611 aa).

The segment at Met-1–Ala-22 is disordered. Residues Met-1 to Ala-36 constitute a chloroplast transit peptide. Residues Thr-55 to Ala-56, Glu-76, Met-125, Ser-129, and Asn-133 to Leu-136 contribute to the FAD site. Hexadecanoate is bound by residues Cys-392, Arg-412, Tyr-427, and Gln-447. Residue Gly-582 coordinates FAD.

It belongs to the GMC oxidoreductase family. FAD serves as cofactor.

The protein localises to the plastid. Its subcellular location is the chloroplast. The enzyme catalyses a long-chain fatty acid + hnu + H(+) = a long-chain alkane + CO2. The catalysed reaction is hnu + hexadecanoate + H(+) = pentadecane + CO2. Its activity is regulated as follows. Activated by blue light and repressed by red light. Functionally, catalyzes the decarboxylation of free fatty acids to n-alkanes or n-alkenes in response to blue light. Substrate preference is toward fatty acids with C17 or C18 chains. Saturated fatty acids are converted to alkanes, not alkenes. The decarboxylation is initiated through electron abstraction from the fatty acid by the photo-excited FAD. In Chlamydomonas reinhardtii (Chlamydomonas smithii), this protein is Fatty acid photodecarboxylase, chloroplastic.